A 228-amino-acid polypeptide reads, in one-letter code: MSKSHLLKYLLISPNLPVGGFCYSEGMESFLHNKNLTDSNSVKELIISELEIGQIRLDARLLLDFFDIFNQINDRKNLKGNLQKLMSLDKWILSSKDSLEMREQQIQMAKSLFDLTKEFGFEYLYENDKKSSWSLAWSWACYCFEITKLEMVENFFYAWSANQLSAALRIIPIGSTKAQLIQRDLLAIISKVSKEIMDKEIDDLYFGNVGLAMAQQNHNDLYTKLFRN.

It belongs to the UreF family. As to quaternary structure, ureD, UreF and UreG form a complex that acts as a GTP-hydrolysis-dependent molecular chaperone, activating the urease apoprotein by helping to assemble the nickel containing metallocenter of UreC. The UreE protein probably delivers the nickel.

Its subcellular location is the cytoplasm. In terms of biological role, required for maturation of urease via the functional incorporation of the urease nickel metallocenter. In Prochlorococcus marinus (strain MIT 9301), this protein is Urease accessory protein UreF.